A 194-amino-acid chain; its full sequence is 5'-deoxynucleotidase VS_2195 (194 aa).

Substrate contacts are provided by residues 18–19 and His-33; that span reads RW. One can recognise an HD domain in the interval 30 to 142; it reads ISEHSLQVAF…VKQADTICAY (113 aa). 3 residues coordinate a divalent metal cation: His-33, His-68, and Asp-69. Substrate-binding positions include Asp-69, 77 to 80, and Asp-137; that span reads DLPT. Residue Asp-137 coordinates a divalent metal cation.

Belongs to the 5DNU family. In terms of assembly, homodimer. The cofactor is a divalent metal cation.

It is found in the cytoplasm. The catalysed reaction is a 2'-deoxyribonucleoside 5'-phosphate + H2O = a 2'-deoxyribonucleoside + phosphate. Functionally, catalyzes the strictly specific dephosphorylation of 2'-deoxyribonucleoside 5'-monophosphates. This is 5'-deoxynucleotidase VS_2195 from Vibrio atlanticus (strain LGP32) (Vibrio splendidus (strain Mel32)).